The chain runs to 749 residues: Chaperone protein DnaK 1 (749 aa).

Threonine 198 bears the Phosphothreonine; by autocatalysis mark. 3 stretches are compositionally biased toward basic and acidic residues: residues 643–653 (RWDADPWDRSR), 661–694 (YDDR…RDRN), and 711–724 (PTWE…RDRS). The tract at residues 643-749 (RWDADPWDRS…GWDDDDDEWF (107 aa)) is disordered. The span at 740-749 (GWDDDDDEWF) shows a compositional bias: acidic residues.

It belongs to the heat shock protein 70 family.

Functionally, acts as a chaperone. This chain is Chaperone protein DnaK 1, found in Synechococcus sp. (strain ATCC 27144 / PCC 6301 / SAUG 1402/1) (Anacystis nidulans).